A 327-amino-acid chain; its full sequence is Lactosylceramide 4-alpha-galactosyltransferase (327 aa).

The DXD motif signature appears at 166–168 (DTD).

This sequence belongs to the glycosyltransferase 32 family.

Its subcellular location is the golgi apparatus membrane. It carries out the reaction a beta-D-Gal-(1-&gt;4)-beta-D-Glc-(1&lt;-&gt;1)-Cer(d18:1(4E)) + UDP-alpha-D-galactose = a globoside Gb3Cer (d18:1(4E)) + UDP + H(+). The enzyme catalyses a beta-D-Gal-(1&lt;-&gt;1')-ceramide + UDP-alpha-D-galactose = alpha-D-Gal-(1-&gt;4)-beta-D-Gal-(1&lt;-&gt;1')-Cer + UDP + H(+). Its pathway is glycolipid biosynthesis. Functionally, catalyzes the transfer of galactose from UDP-alpha-D-galactose to lactosylceramide/beta-D-galactosyl-(1-&gt;4)-beta-D-glucosyl-(1&lt;-&gt;1)-ceramide(d18:1(4E)) to produce globotriaosylceramide/globoside Gb3Cer (d18:1(4E)). Also able to transfer galactose to galactosylceramide/beta-D-Gal-(1&lt;-&gt;1')-Cer. Globoside Gb3Cer is a glycosphingolipid of the globo serie, one of the major types of neutral root structures of glycosphingolipids, that constitute a significant portion of mammalian cell membranes. The polypeptide is Lactosylceramide 4-alpha-galactosyltransferase (A4GALT) (Gorilla gorilla gorilla (Western lowland gorilla)).